We begin with the raw amino-acid sequence, 1558 residues long: Arginine-glutamic acid dipeptide repeats protein (1558 aa).

Residues 1 to 36 (MTADKDKDKDKEKDRDRDRDRERDKRDKARESENAR) are compositionally biased toward basic and acidic residues. Residues 1 to 90 (MTADKDKDKD…KKKSRYERTD (90 aa)) are disordered. Phosphoserine is present on residues S53 and S56. A compositionally biased stretch (basic residues) spans 74–85 (KSRKKPPKKKSR). One can recognise a BAH domain in the interval 103–283 (VVYRPGDCVY…PETRRLNSTQ (181 aa)). T120 bears the Phosphothreonine mark. Phosphoserine occurs at positions 142 and 304. The 104-residue stretch at 284–387 (GEIRVGPSHQ…KALQRLVKKP (104 aa)) folds into the ELM2 domain. Positions 391 to 443 (LIEKCWTEDEVKRFVKGLRQYGKNFFRIRKELLPSKETGELITFYYYWKKTPE) constitute an SANT domain. The segment at 464–495 (TRTASTPVNTPSRPPSSEFLDLSSASEDDFDS) is disordered. Over residues 465-474 (RTASTPVNTP) the composition is skewed to polar residues. A compositionally biased stretch (low complexity) spans 479–488 (SSEFLDLSSA). The segment at 507-532 (CRHCFTTTSKDWHHGGRENILLCTDC) adopts a GATA-type zinc-finger fold. The interval 542 to 1125 (LPPIEKPVDP…PSHASQSARF (584 aa)) is disordered. A Glycyl lysine isopeptide (Lys-Gly) (interchain with G-Cter in SUMO2) cross-link involves residue K560. T593 is subject to Phosphothreonine. S594, S600, and S613 each carry phosphoserine. Low complexity predominate over residues 609–623 (SGRNSPSAASTSSND). Residues 624–640 (SKAETVKKSAKKVKEEA) are compositionally biased toward basic and acidic residues. K637 participates in a covalent cross-link: Glycyl lysine isopeptide (Lys-Gly) (interchain with G-Cter in SUMO2). Phosphoserine is present on residues S642, S656, S675, and S679. Residues 652 to 673 (EKVASDTEDTDRITSKKTKTQE) are compositionally biased toward basic and acidic residues. Residues 688–708 (SDSRSVNDEGSSDPKDIDQDN) show a composition bias toward basic and acidic residues. Polar residues predominate over residues 709–720 (RSTSPSIPSPQD). Positions 726–752 (DSSAQQQMLQAQPPALQAPSGAASAPS) are enriched in low complexity. Residues 778–792 (SPATSQPPNQTQSTV) show a composition bias toward polar residues. Pro residues predominate over residues 806-823 (LHPPRLPSPHPPLQPMTA). 3 stretches are compositionally biased toward low complexity: residues 824-857 (PPSQ…LLQH), 865-874 (GLPSQPSQGQ), and 891-901 (QLPASQSALQP). Over residues 902–932 (QQPPREQPLPPAPLAMPHIKPPPTTPIPQLP) the composition is skewed to pro residues. Over residues 962-972 (KPLSSLSTHHP) the composition is skewed to low complexity. Positions 1012–1023 (HPTTGLHQVPSQ) are enriched in polar residues. A compositionally biased stretch (pro residues) spans 1027-1053 (PQHPFVPGGPPPITPPSCPPTSTPPAG). A compositionally biased stretch (low complexity) spans 1054 to 1077 (PSSSSQPPCSAAVSSGGSVPGAPS). S1098, S1105, and S1107 each carry phosphoserine. The span at 1098–1109 (SPPPPPRSPSPE) shows a compositional bias: pro residues. A Phosphothreonine modification is found at T1111. The stretch at 1148 to 1203 (GSKLAKKREEAIEKAKREAEQKAREEREREKEKEKEREREREREREAERAAKASSS) forms a coiled coil. Position 1150 is an N6-acetyllysine (K1150). Residues 1154-1198 (KREEAIEKAKREAEQKAREEREREKEKEKEREREREREREAERAA) are compositionally biased toward basic and acidic residues. The disordered stretch occupies residues 1154 to 1238 (KREEAIEKAK…TTIAAVPPYI (85 aa)). Y1251 is modified (phosphotyrosine). Phosphoserine is present on S1258.

As to quaternary structure, interacts with HDAC1 and ATN1. Interaction with ATN1 is improved when the poly-Gln region of ATN1 is extended. Interacts with FAT1.

It is found in the nucleus. The protein resides in the PML body. Its function is as follows. Plays a role as a transcriptional repressor during development. May play a role in the control of cell survival. This is Arginine-glutamic acid dipeptide repeats protein (Rere) from Mus musculus (Mouse).